The chain runs to 127 residues: DNA-directed RNA polymerase subunit omega (127 aa).

It belongs to the RNA polymerase subunit omega family. In terms of assembly, the RNAP catalytic core consists of 2 alpha, 1 beta, 1 beta' and 1 omega subunit. When a sigma factor is associated with the core the holoenzyme is formed, which can initiate transcription.

It catalyses the reaction RNA(n) + a ribonucleoside 5'-triphosphate = RNA(n+1) + diphosphate. Functionally, promotes RNA polymerase assembly. Latches the N- and C-terminal regions of the beta' subunit thereby facilitating its interaction with the beta and alpha subunits. This is DNA-directed RNA polymerase subunit omega from Rickettsia typhi (strain ATCC VR-144 / Wilmington).